The following is a 322-amino-acid chain: SUMO-activating enzyme subunit 1A (322 aa).

Residue Met1 is modified to N-acetylmethionine.

Belongs to the ubiquitin-activating E1 family. As to quaternary structure, heterodimer of SAE1A or SAE1B and SAE2. The complex binds SUMO proteins via SAE2.

It localises to the nucleus. It functions in the pathway protein modification; protein sumoylation. Functionally, the dimeric enzyme acts as an E1 ligase for SUMO1 and SUMO2. It mediates ATP-dependent activation of SUMO proteins and formation of a thioester with a conserved cysteine residue on SAE2. Functionally redundant with its paralog SAE1B. The chain is SUMO-activating enzyme subunit 1A (SAE1A) from Arabidopsis thaliana (Mouse-ear cress).